The following is a 247-amino-acid chain: Ubiquinone biosynthesis O-methyltransferase (247 aa).

Residues Arg40, Gly71, Asp92, and Met135 each coordinate S-adenosyl-L-methionine.

This sequence belongs to the methyltransferase superfamily. UbiG/COQ3 family.

The catalysed reaction is a 3-demethylubiquinol + S-adenosyl-L-methionine = a ubiquinol + S-adenosyl-L-homocysteine + H(+). It catalyses the reaction a 3-(all-trans-polyprenyl)benzene-1,2-diol + S-adenosyl-L-methionine = a 2-methoxy-6-(all-trans-polyprenyl)phenol + S-adenosyl-L-homocysteine + H(+). It functions in the pathway cofactor biosynthesis; ubiquinone biosynthesis. O-methyltransferase that catalyzes the 2 O-methylation steps in the ubiquinone biosynthetic pathway. The sequence is that of Ubiquinone biosynthesis O-methyltransferase from Ruegeria sp. (strain TM1040) (Silicibacter sp.).